Consider the following 164-residue polypeptide: MKARELFEKLKKELNNFSIYDIMMIRSFIEKDAKYLPPQYKNHYVEAMMKYLIETFNEIRKKSVDEIQDEEIDEEKLNEMLNRIERFRKYYTPDEERFINLSKILCPYLAFIAKKPLHPEYLTFPGNVKIIKKGNNYYCPVKNKQLNEYSLCEFCVCKSIDELK.

This sequence belongs to the UPF0305 family.

This is UPF0305 protein MJ0646 from Methanocaldococcus jannaschii (strain ATCC 43067 / DSM 2661 / JAL-1 / JCM 10045 / NBRC 100440) (Methanococcus jannaschii).